We begin with the raw amino-acid sequence, 209 residues long: uncharacterized protein (209 aa).

This is an uncharacterized protein from Acanthamoeba polyphaga mimivirus (APMV).